The sequence spans 130 residues: Protein MGF 360-1L (130 aa).

3 consecutive transmembrane segments (helical) span residues 4 to 24 (FLGF…NVNC), 75 to 95 (IIRH…CVAF), and 109 to 129 (LLGL…QPFP).

Belongs to the asfivirus MGF 110 family.

The protein localises to the host membrane. Functionally, plays a role in virus cell tropism, and may be required for efficient virus replication in macrophages. This is Protein MGF 360-1L from Ornithodoros (relapsing fever ticks).